The sequence spans 475 residues: Cytosolic non-specific dipeptidase (475 aa).

Ala-2 is subject to N-acetylalanine. The residue at position 9 (Lys-9) is an N6-acetyllysine. Ser-58 carries the post-translational modification Phosphoserine. Position 99 (His-99) interacts with Mn(2+). Residue Asp-101 is part of the active site. Asp-132 is a Mn(2+) binding site. Glu-166 serves as the catalytic Proton acceptor. Residues 166-167, Asp-195, and His-228 contribute to the substrate site; that span reads EE. Positions 167 and 195 each coordinate Mn(2+). Residue Ser-299 is modified to Phosphoserine. Residues Thr-330, Arg-343, Ser-417, and His-445 each contribute to the substrate site. His-445 contributes to the Mn(2+) binding site.

This sequence belongs to the peptidase M20A family. In terms of assembly, homodimer. The cofactor is Mn(2+).

It localises to the cytoplasm. It catalyses the reaction Hydrolysis of dipeptides, preferentially hydrophobic dipeptides including prolyl amino acids.. It carries out the reaction L-threonyl-L-threonine + H2O = 2 L-threonine. The enzyme catalyses L-threonyl-L-serine + H2O = L-threonine + L-serine. The catalysed reaction is L-seryl-L-threonine + H2O = L-threonine + L-serine. It catalyses the reaction L-cysteinylglycine + H2O = L-cysteine + glycine. It carries out the reaction (S)-lactate + L-phenylalanine = N-[(S)-lactoyl]-L-phenylalanine + H2O. Catalyzes the peptide bond hydrolysis in dipeptides, displaying a non-redundant activity toward threonyl dipeptides. Mediates threonyl dipeptide catabolism in a tissue-specific way. Has high dipeptidase activity toward cysteinylglycine, an intermediate metabolite in glutathione metabolism. Metabolizes N-lactoyl-amino acids, both through hydrolysis to form lactic acid and amino acids, as well as through their formation by reverse proteolysis. Plays a role in the regulation of cell cycle arrest and apoptosis. The chain is Cytosolic non-specific dipeptidase (CNDP2) from Pongo abelii (Sumatran orangutan).